The chain runs to 441 residues: Tol-Pal system protein TolB (441 aa).

The N-terminal stretch at 1–25 is a signal peptide; the sequence is MRIFFFAYVLPTVISLLLGCQGAIA.

It belongs to the TolB family. In terms of assembly, the Tol-Pal system is composed of five core proteins: the inner membrane proteins TolA, TolQ and TolR, the periplasmic protein TolB and the outer membrane protein Pal. They form a network linking the inner and outer membranes and the peptidoglycan layer.

It is found in the periplasm. Functionally, part of the Tol-Pal system, which plays a role in outer membrane invagination during cell division and is important for maintaining outer membrane integrity. This Anaplasma marginale (strain St. Maries) protein is Tol-Pal system protein TolB.